The sequence spans 253 residues: Uridylate kinase (253 aa).

9–12 (KLSG) is a binding site for ATP. Residue Gly-51 coordinates UMP. Gly-52 and Arg-56 together coordinate ATP. UMP contacts are provided by residues Asp-72 and 133-140 (SGNPFFTT). ATP-binding residues include Thr-160, Tyr-166, and Asp-169.

The protein belongs to the UMP kinase family. Homohexamer.

Its subcellular location is the cytoplasm. It catalyses the reaction UMP + ATP = UDP + ADP. The protein operates within pyrimidine metabolism; CTP biosynthesis via de novo pathway; UDP from UMP (UMPK route): step 1/1. Its activity is regulated as follows. Inhibited by UTP. Its function is as follows. Catalyzes the reversible phosphorylation of UMP to UDP. The sequence is that of Uridylate kinase from Synechococcus sp. (strain JA-2-3B'a(2-13)) (Cyanobacteria bacterium Yellowstone B-Prime).